The sequence spans 492 residues: Glutamyl-tRNA(Gln) amidotransferase subunit A (492 aa).

Active-site charge relay system residues include Lys-78 and Ser-158. Ser-182 acts as the Acyl-ester intermediate in catalysis.

It belongs to the amidase family. GatA subfamily. Heterotrimer of A, B and C subunits.

The catalysed reaction is L-glutamyl-tRNA(Gln) + L-glutamine + ATP + H2O = L-glutaminyl-tRNA(Gln) + L-glutamate + ADP + phosphate + H(+). In terms of biological role, allows the formation of correctly charged Gln-tRNA(Gln) through the transamidation of misacylated Glu-tRNA(Gln) in organisms which lack glutaminyl-tRNA synthetase. The reaction takes place in the presence of glutamine and ATP through an activated gamma-phospho-Glu-tRNA(Gln). In Zymomonas mobilis subsp. mobilis (strain ATCC 31821 / ZM4 / CP4), this protein is Glutamyl-tRNA(Gln) amidotransferase subunit A.